Reading from the N-terminus, the 475-residue chain is tRNA-2-methylthio-N(6)-dimethylallyladenosine synthase (475 aa).

Over residues 1-10 the composition is skewed to basic and acidic residues; it reads MQETTVKRDG. A disordered region spans residues 1–22; that stretch reads MQETTVKRDGASPSDAGTPATT. Residues 27-144 enclose the MTTase N-terminal domain; that stretch reads GKLYIRTFGC…LPDLIKRRRA (118 aa). Residues Cys36, Cys73, Cys107, Cys181, Cys185, and Cys188 each coordinate [4Fe-4S] cluster. The 234-residue stretch at 167–400 folds into the Radical SAM core domain; it reads RVDGATAFVS…QALINQQAAA (234 aa). The TRAM domain maps to 403 to 466; the sequence is QGMIGTRQRV…TNSLRGRVAG (64 aa).

It belongs to the methylthiotransferase family. MiaB subfamily. Monomer. [4Fe-4S] cluster is required as a cofactor.

The protein localises to the cytoplasm. It catalyses the reaction N(6)-dimethylallyladenosine(37) in tRNA + (sulfur carrier)-SH + AH2 + 2 S-adenosyl-L-methionine = 2-methylsulfanyl-N(6)-dimethylallyladenosine(37) in tRNA + (sulfur carrier)-H + 5'-deoxyadenosine + L-methionine + A + S-adenosyl-L-homocysteine + 2 H(+). In terms of biological role, catalyzes the methylthiolation of N6-(dimethylallyl)adenosine (i(6)A), leading to the formation of 2-methylthio-N6-(dimethylallyl)adenosine (ms(2)i(6)A) at position 37 in tRNAs that read codons beginning with uridine. The polypeptide is tRNA-2-methylthio-N(6)-dimethylallyladenosine synthase (Bordetella bronchiseptica (strain ATCC BAA-588 / NCTC 13252 / RB50) (Alcaligenes bronchisepticus)).